The primary structure comprises 248 residues: UPF0736 protein BCE_1296 (248 aa).

It belongs to the UPF0736 family.

This chain is UPF0736 protein BCE_1296, found in Bacillus cereus (strain ATCC 10987 / NRS 248).